We begin with the raw amino-acid sequence, 103 residues long: ATP-dependent Clp protease adapter protein ClpS 2 (103 aa).

It belongs to the ClpS family. As to quaternary structure, binds to the N-terminal domain of the chaperone ClpA.

In terms of biological role, involved in the modulation of the specificity of the ClpAP-mediated ATP-dependent protein degradation. The polypeptide is ATP-dependent Clp protease adapter protein ClpS 2 (Agrobacterium fabrum (strain C58 / ATCC 33970) (Agrobacterium tumefaciens (strain C58))).